Consider the following 337-residue polypeptide: Ferrochelatase (337 aa).

The Fe cation site is built by histidine 189 and glutamate 293.

This sequence belongs to the ferrochelatase family.

The protein resides in the cytoplasm. It carries out the reaction heme b + 2 H(+) = protoporphyrin IX + Fe(2+). It functions in the pathway porphyrin-containing compound metabolism; protoheme biosynthesis; protoheme from protoporphyrin-IX: step 1/1. Its function is as follows. Catalyzes the ferrous insertion into protoporphyrin IX. The sequence is that of Ferrochelatase from Pseudomonas putida (strain W619).